The chain runs to 252 residues: 5-oxoprolinase subunit A (252 aa).

Belongs to the LamB/PxpA family. In terms of assembly, forms a complex composed of PxpA, PxpB and PxpC.

The catalysed reaction is 5-oxo-L-proline + ATP + 2 H2O = L-glutamate + ADP + phosphate + H(+). Catalyzes the cleavage of 5-oxoproline to form L-glutamate coupled to the hydrolysis of ATP to ADP and inorganic phosphate. This Mycobacterium leprae (strain Br4923) protein is 5-oxoprolinase subunit A.